Consider the following 413-residue polypeptide: S-adenosylmethionine synthase (413 aa).

Position 15 (histidine 15) interacts with ATP. Aspartate 17 serves as a coordination point for Mg(2+). Glutamate 43 is a K(+) binding site. L-methionine-binding residues include glutamate 56 and glutamine 100. The flexible loop stretch occupies residues 100-110 (QSPDISQGVND). ATP-binding positions include 171–173 (DGK), 248–249 (KF), aspartate 257, 263–264 (RK), alanine 280, and lysine 284. L-methionine is bound at residue aspartate 257. Residue lysine 288 coordinates L-methionine.

The protein belongs to the AdoMet synthase family. As to quaternary structure, homotetramer; dimer of dimers. Mg(2+) is required as a cofactor. The cofactor is K(+).

The protein resides in the cytoplasm. It carries out the reaction L-methionine + ATP + H2O = S-adenosyl-L-methionine + phosphate + diphosphate. It participates in amino-acid biosynthesis; S-adenosyl-L-methionine biosynthesis; S-adenosyl-L-methionine from L-methionine: step 1/1. Functionally, catalyzes the formation of S-adenosylmethionine (AdoMet) from methionine and ATP. The overall synthetic reaction is composed of two sequential steps, AdoMet formation and the subsequent tripolyphosphate hydrolysis which occurs prior to release of AdoMet from the enzyme. The polypeptide is S-adenosylmethionine synthase (Prochlorococcus marinus (strain MIT 9301)).